Consider the following 241-residue polypeptide: 3-deoxy-D-manno-octulosonic acid kinase (241 aa).

Aspartate 171 is an active-site residue.

This sequence belongs to the protein kinase superfamily. KdkA/RfaP family.

Its subcellular location is the cell inner membrane. The catalysed reaction is an alpha-Kdo-(2-&gt;6)-lipid IVA + ATP = a 4-O-phospho-alpha-Kdo-(2-&gt;6)-lipid IVA + ADP + H(+). It functions in the pathway bacterial outer membrane biogenesis; LPS core biosynthesis. Catalyzes the ATP-dependent phosphorylation of the 3-deoxy-D-manno-octulosonic acid (Kdo) residue in Kdo-lipid IV(A) at the 4-OH position. This Haemophilus influenzae (strain PittGG) protein is 3-deoxy-D-manno-octulosonic acid kinase.